The chain runs to 330 residues: Phosphate acyltransferase (330 aa).

Belongs to the PlsX family. Homodimer. Probably interacts with PlsY.

Its subcellular location is the cytoplasm. The catalysed reaction is a fatty acyl-[ACP] + phosphate = an acyl phosphate + holo-[ACP]. Its pathway is lipid metabolism; phospholipid metabolism. Catalyzes the reversible formation of acyl-phosphate (acyl-PO(4)) from acyl-[acyl-carrier-protein] (acyl-ACP). This enzyme utilizes acyl-ACP as fatty acyl donor, but not acyl-CoA. The sequence is that of Phosphate acyltransferase from Streptococcus pneumoniae serotype 2 (strain D39 / NCTC 7466).